The primary structure comprises 290 residues: Phosphatidylglycerol--prolipoprotein diacylglyceryl transferase (290 aa).

The next 7 helical transmembrane spans lie at 21–41 (VALHWYGLMYLVGFIFAMWLA), 60–80 (LLYAGFLGVFLGGRIGYVLFY), 96–116 (WDGGMSFHGGLIGVILVMVIF), 124–144 (FFQVADFMAPLIPFGLGAGRL), 198–218 (SQLYELALEGVVLFIILNLFI), 225–245 (GSVSGLFLIGYGAFRIIVEFF), and 260–280 (ISMGQILSIPMIVAGIIMMIW). Arg-143 provides a ligand contact to a 1,2-diacyl-sn-glycero-3-phospho-(1'-sn-glycerol).

The protein belongs to the Lgt family.

Its subcellular location is the cell inner membrane. The enzyme catalyses L-cysteinyl-[prolipoprotein] + a 1,2-diacyl-sn-glycero-3-phospho-(1'-sn-glycerol) = an S-1,2-diacyl-sn-glyceryl-L-cysteinyl-[prolipoprotein] + sn-glycerol 1-phosphate + H(+). The protein operates within protein modification; lipoprotein biosynthesis (diacylglyceryl transfer). In terms of biological role, catalyzes the transfer of the diacylglyceryl group from phosphatidylglycerol to the sulfhydryl group of the N-terminal cysteine of a prolipoprotein, the first step in the formation of mature lipoproteins. This is Phosphatidylglycerol--prolipoprotein diacylglyceryl transferase from Enterobacter sp. (strain 638).